Reading from the N-terminus, the 1366-residue chain is DNA-directed RNA polymerase subunit beta'' (1366 aa).

Residues cysteine 220, cysteine 291, cysteine 298, and cysteine 301 each contribute to the Zn(2+) site.

Belongs to the RNA polymerase beta' chain family. RpoC2 subfamily. In plastids the minimal PEP RNA polymerase catalytic core is composed of four subunits: alpha, beta, beta', and beta''. When a (nuclear-encoded) sigma factor is associated with the core the holoenzyme is formed, which can initiate transcription. Zn(2+) serves as cofactor.

The protein resides in the plastid. It is found in the chloroplast. The catalysed reaction is RNA(n) + a ribonucleoside 5'-triphosphate = RNA(n+1) + diphosphate. Functionally, DNA-dependent RNA polymerase catalyzes the transcription of DNA into RNA using the four ribonucleoside triphosphates as substrates. This chain is DNA-directed RNA polymerase subunit beta'', found in Phaseolus vulgaris (Kidney bean).